We begin with the raw amino-acid sequence, 182 residues long: Unknown protein 1 (182 aa).

This is Unknown protein 1 from Helianthus annuus (Common sunflower).